A 1265-amino-acid polypeptide reads, in one-letter code: Dynactin subunit 1 (1265 aa).

The region spanning 27 to 69 (GMTSFAVGKWVGVVLDEPKGKNSGSIKGQQYFQCDENCGMFVR) is the CAP-Gly domain. Residues 81 to 179 (GSRRSIEDVS…GNGAASHASS (99 aa)) are disordered. Serine 85, serine 110, serine 114, serine 117, and serine 121 each carry phosphoserine. Low complexity-rich tracts occupy residues 103-138 (RLSSSRTSLSSSRQSLLGSRTQLTTSLSERTASSSS) and 161-177 (AEGAPAASGGNGAASHA). Serine 183 carries the post-translational modification Phosphoserine. Coiled coils occupy residues 213-570 (NSGA…ESLQ), 812-836 (LIQFLNENMESVRQQVKLIKRRLPS), and 967-1084 (QRAQ…NSTT). The tract at residues 1082–1106 (STTGKVQPGSESHSPHNISLSGNTS) is disordered. Position 1117 is a phosphoserine (serine 1117). The stretch at 1128 to 1160 (EEVELLKNAFNQERNQRLRLQAQDMRAKLSQFE) forms a coiled coil.

The protein belongs to the dynactin 150 kDa subunit family. Monomer and homodimer. Subunit of dynactin, a multiprotein complex part of a tripartite complex with dynein and a adapter, such as BICDL1, BICD2 or HOOK3. The dynactin complex is built around ACTR1A/ACTB filament and consists of an actin-related filament composed of a shoulder domain, a pointed end and a barbed end. Its length is defined by its flexible shoulder domain. The soulder is composed of 2 DCTN1 subunits, 4 DCTN2 and 2 DCTN3. DCTN1/p150(glued) binds directly to microtubules and to cytoplasmic dynein.

It localises to the cytoplasm. Its subcellular location is the cytoskeleton. Its function is as follows. Part of the dynactin complex that activates the molecular motor dynein for ultra-processive transport along microtubules. Plays a key role in dynein-mediated retrograde transport of vesicles and organelles along microtubules by recruiting and tethering dynein to microtubules. Binds to both dynein and microtubules providing a link between specific cargos, microtubules and dynein. Essential for targeting dynein to microtubule plus ends, recruiting dynein to membranous cargos and enhancing dynein processivity (the ability to move along a microtubule for a long distance without falling off the track). Can also act as a brake to slow the dynein motor during motility along the microtubule. Can regulate microtubule stability by promoting microtubule formation, nucleation and polymerization and by inhibiting microtubule catastrophe in neurons. Inhibits microtubule catastrophe by binding both to microtubules and to tubulin, leading to enhanced microtubule stability along the axon. Plays a role in metaphase spindle orientation. Plays a role in centriole cohesion and subdistal appendage organization and function. Its recruitment to the centriole in a KIF3A-dependent manner is essential for the maintenance of centriole cohesion and the formation of subdistal appendage. Also required for microtubule anchoring at the mother centriole. Plays a role in primary cilia formation. This Drosophila melanogaster (Fruit fly) protein is Dynactin subunit 1.